The chain runs to 141 residues: MAKKVTAVVKLQLPAGKATPAPPVGPALGATGINIMAFCKDYNEKTSAQVGTIIPVEITVYSDRSFTYILKTPPAADLLRKAAGIQRGSGKTGTQGAGSITRAQLRQLAETKMPDLNANDIEAAEKIIAGTARSMGIAIKD.

It belongs to the universal ribosomal protein uL11 family. Part of the ribosomal stalk of the 50S ribosomal subunit. Interacts with L10 and the large rRNA to form the base of the stalk. L10 forms an elongated spine to which L12 dimers bind in a sequential fashion forming a multimeric L10(L12)X complex. In terms of processing, one or more lysine residues are methylated.

In terms of biological role, forms part of the ribosomal stalk which helps the ribosome interact with GTP-bound translation factors. The protein is Large ribosomal subunit protein uL11 of Herpetosiphon aurantiacus (strain ATCC 23779 / DSM 785 / 114-95).